Consider the following 375-residue polypeptide: Chaperone protein DnaJ (375 aa).

Positions 5 to 70 constitute a J domain; that stretch reads DYYSLLEVER…QKRAAYDRYG (66 aa). The CR-type zinc finger occupies 135-213; that stretch reads GKTVDIEIDV…CHGEGRCEKH (79 aa). Positions 148, 151, 165, 168, 187, 190, 201, and 204 each coordinate Zn(2+). CXXCXGXG motif repeat units follow at residues 148-155, 165-172, 187-194, and 201-208; these read CDACHGSG, CDTCHGSG, CPVCQGKG, and CPECHGEG.

This sequence belongs to the DnaJ family. Homodimer. Zn(2+) serves as cofactor.

The protein localises to the cytoplasm. In terms of biological role, participates actively in the response to hyperosmotic and heat shock by preventing the aggregation of stress-denatured proteins and by disaggregating proteins, also in an autonomous, DnaK-independent fashion. Unfolded proteins bind initially to DnaJ; upon interaction with the DnaJ-bound protein, DnaK hydrolyzes its bound ATP, resulting in the formation of a stable complex. GrpE releases ADP from DnaK; ATP binding to DnaK triggers the release of the substrate protein, thus completing the reaction cycle. Several rounds of ATP-dependent interactions between DnaJ, DnaK and GrpE are required for fully efficient folding. Also involved, together with DnaK and GrpE, in the DNA replication of plasmids through activation of initiation proteins. The polypeptide is Chaperone protein DnaJ (Zymomonas mobilis subsp. mobilis (strain ATCC 31821 / ZM4 / CP4)).